We begin with the raw amino-acid sequence, 637 residues long: Acetolactate synthase 2, chloroplastic (637 aa).

The N-terminal 73 residues, 1–73, are a transit peptide targeting the chloroplast; sequence MASFSFFGTI…SSKYAPNVPR (73 aa). Residues 35–69 form a disordered region; the sequence is RRATRVSVSANSKKDQDRTASRRENPSTFSSKYAP. A compositionally biased stretch (basic and acidic residues) spans 46–59; sequence SKKDQDRTASRREN. E120 contributes to the thiamine diphosphate binding site. FAD contacts are provided by residues R222, 329–350, and 372–391; these read HGTV…FGVR and DIDS…VCCD. Residues 462–542 are thiamine pyrophosphate binding; that stretch reads QHQMWAAQFY…VKVLLINNQH (81 aa). Residues D513 and N540 each coordinate Mg(2+).

Belongs to the TPP enzyme family. Requires Mg(2+) as cofactor. It depends on thiamine diphosphate as a cofactor.

Its subcellular location is the plastid. It is found in the chloroplast. The enzyme catalyses 2 pyruvate + H(+) = (2S)-2-acetolactate + CO2. Its pathway is amino-acid biosynthesis; L-isoleucine biosynthesis; L-isoleucine from 2-oxobutanoate: step 1/4. It functions in the pathway amino-acid biosynthesis; L-valine biosynthesis; L-valine from pyruvate: step 1/4. In Brassica napus (Rape), this protein is Acetolactate synthase 2, chloroplastic.